The primary structure comprises 67 residues: MQVLVRDNNVDQALKALKKKLQREGVFREMKLRRHYEKPSERRAREAAEAVRRARKMERKRIEREGF.

This sequence belongs to the bacterial ribosomal protein bS21 family.

The polypeptide is Small ribosomal subunit protein bS21 (Acidiphilium cryptum (strain JF-5)).